Reading from the N-terminus, the 1732-residue chain is Transient receptor potential cation channel subfamily M member 3 (1732 aa).

Residues 1–894 (MPEPWGTVYF…RKIYEFYNAP (894 aa)) lie on the Cytoplasmic side of the membrane. Calmodulin-binding regions lie at residues 192 to 215 (NFELQPKLKQVFGKGLIKAAMTTG), 300 to 323 (TGKYGAEVKLRRQLEKHISLQKIN), 601 to 624 (RKRFRTLYHNLFGPKRPKALKLLG), and 793 to 816 (RKNSGLKVILGILLPPSILSLEFK). The interval 617 to 625 (PKALKLLGM) is required for the inhibitory action of G-beta/gamma-subunits of heterotrimeric G-proteins. Ser-796 contributes to the 1,2-dioctanoyl-sn-glycero-3-phospho-(1D-myo-inositol-4,5-bisphosphate) binding site. A helical membrane pass occupies residues 895–918 (IVKFWFYTLAYIGYLMLFNYIVLV). The Extracellular segment spans residues 919–925 (KMERWPS). Residues 926–948 (TQEWIVISYIFTLGIEKMREILM) form a helical membrane-spanning segment. At 949 to 964 (SEPGKLLQKVKVWLQE) the chain is on the cytoplasmic side. A helical transmembrane segment spans residues 965–985 (YWNVTDLIAILLFSVGMILRL). The Extracellular segment spans residues 986–989 (QDQP). The chain crosses the membrane as a helical span at residues 990–1013 (FRSDGRVIYCVNIIYWYIRLLDIF). At 1014 to 1028 (GVNKYLGPYVMMIGK) the chain is on the cytoplasmic side. Lys-1017 and Tyr-1018 together coordinate 1,2-dioctanoyl-sn-glycero-3-phospho-(1D-myo-inositol-4,5-bisphosphate). A helical transmembrane segment spans residues 1029–1056 (MMIDMMYFVIIMLVVLMSFGVARQAILF). At 1057-1111 (PNEEPSWKLAKNIFYMPYWMIYGEVFADQIDPPCGQNETREDGKIIQLPPCKTGA) the chain is on the extracellular side. The helical transmembrane segment at 1112 to 1137 (WIVPAIMACYLLVANILLVNLLIAVF) threads the bilayer. Residues 1138-1732 (NNTFFEVKSI…AFQSFESKHN (595 aa)) lie on the Cytoplasmic side of the membrane. The stretch at 1241–1301 (ERIRVTSERV…LERLTGLERA (61 aa)) forms a coiled coil. The segment covering 1459–1476 (PVPSTAPSSSAYATLAPT) has biased composition (low complexity). Disordered stretches follow at residues 1459–1478 (PVPSTAPSSSAYATLAPTDR) and 1611–1732 (REAE…SKHN). Polar residues-rich tracts occupy residues 1635–1653 (AISSQEGDNSERTLSNNIT), 1690–1701 (NTASLRNPFQRS), and 1720–1732 (RTSAFQSFESKHN).

This sequence belongs to the transient receptor (TC 1.A.4) family. LTrpC subfamily. TRPM3 sub-subfamily. In terms of assembly, homotetramer. Interacts with TRPM1; the interaction results in the formation of a heteromultimeric cation channel complex that are functionally different from the homomeric channels. In terms of tissue distribution, expressed primarily in the kidney and, at lower levels, in brain, testis, ovary, pancreas and spinal cord. Expression in the brain and kidney was determined at protein level. In the kidney, expressed predominantly in the collecting tubular epithelium in the medulla, medullary rays, and periglomerular regions; in the brain, highest levels are found in the cerebellum, choroid plexus, the locus coeruleus, the posterior thalamus and the substantia nigra. Down-regulated in renal tumors compared to normal kidney. Expressed in the lens.

It localises to the cell membrane. The catalysed reaction is Ca(2+)(in) = Ca(2+)(out). The enzyme catalyses Mn(2+)(in) = Mn(2+)(out). It catalyses the reaction Zn(2+)(in) = Zn(2+)(out). It carries out the reaction Mg(2+)(in) = Mg(2+)(out). Activated by the neurosteroid pregnelonone sulfate (PregS); PregS activates the channel by shifting its current-voltage activation curve toward more negative membrane potentials and also potentiates temperature-induced activation. Activated by sphingosine. Activated by heat. Intracellular Ca(2+) inhibits TRPM3 probably via interaction with Ca(2+)/calmodulin. Intracellular Mg(2+) inhibits TRPM3 activity. Both intracellular and extracellular protons block TRPM3 through propable binding sites in the pore region. Positively regulated by phosphoinositide phosphoinositol 4,5-biphosphate (PI(4,5)P2). Strongly inhibited by activation of G(i)-coupled receptors via direct binding with G-betagamma-subunits of heterotrimeric G-proteins. Functionally, constitutively active, non-selective divalent cation-conducting channel that is permeable to Ca(2+), Mn(2+), and Mg(2+), with a high permeability for Ca(2+). However, can be enhanced by increasing temperature and by ligands, including the endogenous neurosteroid pregnenolone sulfate and sphingosine-1 and suppressed by intracellular Mg(2+). Implicated in a variety of cellular processes, including insulin/peptide secretion, vascular constriction and dilation, noxious heat sensing, inflammatory and spontaneous pain sensitivity. In neurons of the dorsal root ganglia, functions as thermosensitive channel for the detection of noxious heat and spontaneous pain. Suggested to function as an ionotropic steroid receptor in beta-cell, indeed pregnenolone sulfate leads to Ca(2+) influx and enhanced insulin secretion. Mediates Zn(2+) uptake into the lumen of pancreatic beta cell secretory granules, thereby regulating insulin secretion. Forms heteromultimeric ion channels with TRPM1 which are permeable for Ca(2+) and Zn(2+) ions. Exists as multiple splice variants which differ significantly in their biophysical properties. The chain is Transient receptor potential cation channel subfamily M member 3 from Homo sapiens (Human).